A 90-amino-acid polypeptide reads, in one-letter code: Probable Fe(2+)-trafficking protein (90 aa).

It belongs to the Fe(2+)-trafficking protein family. As to quaternary structure, monomer.

In terms of biological role, could be a mediator in iron transactions between iron acquisition and iron-requiring processes, such as synthesis and/or repair of Fe-S clusters in biosynthetic enzymes. The sequence is that of Probable Fe(2+)-trafficking protein from Yersinia pseudotuberculosis serotype O:1b (strain IP 31758).